Consider the following 175-residue polypeptide: Cell number regulator 9 (175 aa).

The next 2 membrane-spanning stretches (helical) occupy residues 53–73 (GLCC…AEIV) and 80–100 (CGVA…HWIY).

It belongs to the cornifelin family. As to expression, expressed in roots, coleoptiles, leaves and stalks.

The protein localises to the membrane. The polypeptide is Cell number regulator 9 (CNR9) (Zea mays (Maize)).